A 253-amino-acid chain; its full sequence is DNA repair protein RecO (253 aa).

Belongs to the RecO family.

Its function is as follows. Involved in DNA repair and RecF pathway recombination. In Staphylococcus epidermidis (strain ATCC 35984 / DSM 28319 / BCRC 17069 / CCUG 31568 / BM 3577 / RP62A), this protein is DNA repair protein RecO.